The following is a 4456-amino-acid chain: Dynein axonemal heavy chain 2 (4456 aa).

The span at 1–12 (MASKAEKKRKVA) shows a compositional bias: basic residues. Positions 1–55 (MASKAEKKRKVAGRGGARAGRVVRAPQSTAGPGATEASLLPDGQEPEPESGKEDS) are disordered. The segment at 1 to 1795 (MASKAEKKRK…RQTNTQFQYG (1795 aa)) is stem. Residues 1218–1274 (LDQIAQMRAMLMAMRDEENNLRSNLGIFKIEQPVSKDLQILEKELDALQQVWEITRD) are a coiled coil. A TPR 1 repeat occupies 1439-1474 (EDNQVALSTMKASRFVKAFEKDVDHWERCLSLILEV). 4 AAA regions span residues 1794 to 2015 (YGYE…LLRY), 2075 to 2302 (DTIE…DNCN), 2407 to 2654 (RYPP…VFQG), and 2751 to 3003 (EYNL…LRRY). ATP-binding positions include 1832-1839 (GPAGTGKT), 2113-2120 (GGTGSSKT), and 2445-2452 (GPVGTGKT). A TPR 2 repeat occupies 2750-2783 (NEYNLSPSVVPMQLVLFREAIEHITRIVRVIGQP). Residue 2791-2798 (GIGGSGRQ) coordinates ATP. Positions 3018 to 3301 (YKKLLGEKRQ…EELRKKSEEM (284 aa)) are stalk. Residues 3041-3078 (FKIDETREKVEVMSLELEDAKKKVAEFQKQCEEYLVII) adopt a coiled-coil conformation. A TPR 3 repeat occupies 3101–3134 (IEEVKCQALADNAQKDLEEALPALEEAMRALESL). Coiled-coil stretches lie at residues 3245 to 3333 (KRIR…EEDL) and 3552 to 3596 (VRKE…GSLL). AAA regions lie at residues 3387–3617 (LTNP…EVTE) and 3833–4052 (VTSF…LLSL). 2 TPR repeats span residues 4101-4134 (TTPF…LPSM) and 4135-4169 (DPPE…QPQI).

Belongs to the dynein heavy chain family. Part of the axonemal inner dynein arm complex that consists of at least two heavy chains and a number of intermediate and light chains. Interacts with DNAI4.

It is found in the cytoplasm. Its subcellular location is the cytoskeleton. The protein localises to the cilium axoneme. It localises to the flagellum axoneme. Functionally, as part of the axonemal inner dynein arm complex plays a central role in ciliary beat. Expressed in sperm flagellum, it is required for sperm motility. Dyneins are microtubule-based molecular motors possessing ATPase activities that can convert the chemical energy of ATP into relative sliding between adjacent microtubule doublets to generate ciliary bending. This is Dynein axonemal heavy chain 2 from Mus musculus (Mouse).